A 271-amino-acid polypeptide reads, in one-letter code: Probable WRKY transcription factor 69 (271 aa).

Disordered stretches follow at residues methionine 1–lysine 47 and proline 130–alanine 166. Acidic residues predominate over residues glutamate 9–tyrosine 18. The segment at residues glycine 64–proline 130 is a DNA-binding region (WRKY).

Belongs to the WRKY group II-e family.

It is found in the nucleus. Transcription factor. Interacts specifically with the W box (5'-(T)TGAC[CT]-3'), a frequently occurring elicitor-responsive cis-acting element. The polypeptide is Probable WRKY transcription factor 69 (WRKY69) (Arabidopsis thaliana (Mouse-ear cress)).